We begin with the raw amino-acid sequence, 127 residues long: Large ribosomal subunit protein bL12 (127 aa).

This sequence belongs to the bacterial ribosomal protein bL12 family. In terms of assembly, homodimer. Part of the ribosomal stalk of the 50S ribosomal subunit. Forms a multimeric L10(L12)X complex, where L10 forms an elongated spine to which 2 to 4 L12 dimers bind in a sequential fashion. Binds GTP-bound translation factors.

Its function is as follows. Forms part of the ribosomal stalk which helps the ribosome interact with GTP-bound translation factors. Is thus essential for accurate translation. This is Large ribosomal subunit protein bL12 from Streptomyces griseus subsp. griseus (strain JCM 4626 / CBS 651.72 / NBRC 13350 / KCC S-0626 / ISP 5235).